We begin with the raw amino-acid sequence, 136 residues long: MALNIRVMAPNRIVWNSEAQEIILSTNSGQIGILPNHAPLLTALDIGIMRILVNGQWTSMALMGGFALVDNNQLTILVNEAEKASEIDPKEAENNFELAKQNLAAAEGRKQIIEANLSFQRAKARLDAVNASSRLG.

This sequence belongs to the ATPase epsilon chain family. F-type ATPases have 2 components, CF(1) - the catalytic core - and CF(0) - the membrane proton channel. CF(1) has five subunits: alpha(3), beta(3), gamma(1), delta(1), epsilon(1). CF(0) has three main subunits: a, b and c.

The protein localises to the plastid. The protein resides in the chloroplast thylakoid membrane. Produces ATP from ADP in the presence of a proton gradient across the membrane. This Chaetosphaeridium globosum (Charophycean green alga) protein is ATP synthase epsilon chain, chloroplastic.